Consider the following 299-residue polypeptide: Probable inactive heme oxygenase 2, chloroplastic (299 aa).

Over residues 1–15 (MASLLRPTPLLSTPR) the composition is skewed to low complexity. Disordered regions lie at residues 1–20 (MASL…LTHS), 45–70 (LCRS…KQYP), and 96–126 (DLSE…EETW). The transit peptide at 1–83 (MASLLRPTPL…IGITEEMRFV (83 aa)) directs the protein to the chloroplast. Polar residues predominate over residues 46–57 (CRSTPTPSQQKA). Residues 58-67 (SQRKRTRYRK) are compositionally biased toward basic residues. Positions 105–122 (EKEEEEEEEDDDDDDEVK) are enriched in acidic residues.

It belongs to the heme oxygenase family. As to expression, widely expressed at low levels.

It is found in the plastid. The protein resides in the chloroplast. Probable inactive heme oxygenase. Binds protoporphyrin IX, a precursor for both heme and chlorophyll biosynthesis. Plays a minor role in phytochrome assembly and photomorphogenesis. This Arabidopsis thaliana (Mouse-ear cress) protein is Probable inactive heme oxygenase 2, chloroplastic (HO2).